The sequence spans 401 residues: Type 3 secretion system translocon protein SctE (401 aa).

The stretch at 129–160 (IQRLHEQNMKKIEENQEKIKETEENAKQVKKS) forms a coiled coil. 2 helical membrane-spanning segments follow: residues 166–186 (IFGW…VASG) and 225–245 (LGPI…VMTF). A coiled-coil region spans residues 345–379 (LALNKADMAALQSIIDRLKEELSHLSESHRQVMEL).

This sequence belongs to the SctE/SipB/YopB family. The core secretion machinery of the T3SS is composed of approximately 20 different proteins, including cytoplasmic components, a base, an export apparatus and a needle. This subunit is involved in the formation of a pore, called the translocon, in host membrane. Interacts with YopD/SctB. Together with YopD/SctB, forms a multimeric integral membrane complex with a mass of between 500 and 700 kDa.

Its subcellular location is the secreted. It localises to the host membrane. Functionally, component of the type III secretion system (T3SS), also called injectisome, which is used to inject bacterial effector proteins into eukaryotic host cells. YopB/SctE and YopD/SctB are inserted into the host membrane where they form a pore and allow the translocation of effector proteins into the cytosol of target cells. Is an essential virulence determinant. Required for YopE translocation. In terms of biological role, essential for the establishment of Yersinia infections in a mouse model system, but not for the targeting of effector Yops. May modulate the host's immune response at a distance from the site of infection. The polypeptide is Type 3 secretion system translocon protein SctE (Yersinia enterocolitica).